Reading from the N-terminus, the 371-residue chain is 4-hydroxy-3-methylbut-2-en-1-yl diphosphate synthase (flavodoxin) (371 aa).

Positions 269, 272, 304, and 311 each coordinate [4Fe-4S] cluster.

The protein belongs to the IspG family. [4Fe-4S] cluster is required as a cofactor.

The catalysed reaction is (2E)-4-hydroxy-3-methylbut-2-enyl diphosphate + oxidized [flavodoxin] + H2O + 2 H(+) = 2-C-methyl-D-erythritol 2,4-cyclic diphosphate + reduced [flavodoxin]. Its pathway is isoprenoid biosynthesis; isopentenyl diphosphate biosynthesis via DXP pathway; isopentenyl diphosphate from 1-deoxy-D-xylulose 5-phosphate: step 5/6. Converts 2C-methyl-D-erythritol 2,4-cyclodiphosphate (ME-2,4cPP) into 1-hydroxy-2-methyl-2-(E)-butenyl 4-diphosphate. This Acinetobacter baylyi (strain ATCC 33305 / BD413 / ADP1) protein is 4-hydroxy-3-methylbut-2-en-1-yl diphosphate synthase (flavodoxin).